Consider the following 125-residue polypeptide: Large ribosomal subunit protein bL12 (125 aa).

This sequence belongs to the bacterial ribosomal protein bL12 family. As to quaternary structure, homodimer. Part of the ribosomal stalk of the 50S ribosomal subunit. Forms a multimeric L10(L12)X complex, where L10 forms an elongated spine to which 2 to 4 L12 dimers bind in a sequential fashion. Binds GTP-bound translation factors.

In terms of biological role, forms part of the ribosomal stalk which helps the ribosome interact with GTP-bound translation factors. Is thus essential for accurate translation. The protein is Large ribosomal subunit protein bL12 of Sphingopyxis alaskensis (strain DSM 13593 / LMG 18877 / RB2256) (Sphingomonas alaskensis).